Reading from the N-terminus, the 1838-residue chain is MDVHTRWKARSALRPGAPLLPPLLLLLLWAPPPSRAAQPADLLKVLDFHNLPDGITKTTGFCATRRSSKGPDVAYRVTKDAQLSAPTKQLYPASAFPEDFSILTTVKAKKGSQAFLVSIYNEQGIQQIGLELGRSPVFLYEDHTGKPGPEDYPLFRGINLSDGKWHRIALSVHKKNVTLILDCKKKTTKFLDRSDHPMIDINGIIVFGTRILDEEVFEGDIQQLLFVSDHRAAYDYCEHYSPDCDTAVPDTPQSQDPNPDEYYTEGDGEGETYYYEYPYYEDPEDLGKEPTPSKKPVEAAKETTEVPEELTPTPTEAAPMPETSEGAGKEEDVGIGDYDYVPSEDYYTPSPYDDLTYGEGEENPDQPTDPGAGAEIPTSTADTSNSSNPAPPPGEGADDLEGEFTEETIRNLDENYYDPYYDPTSSPSEIGPGMPANQDTIYEGIGGPRGEKGQKGEPAIIEPGMLIEGPPGPEGPAGLPGPPGTMGPTGQVGDPGERGPPGRPGLPGADGLPGPPGTMLMLPFRFGGGGDAGSKGPMVSAQESQAQAILQQARLALRGPAGPMGLTGRPGPVGPPGSGGLKGEPGDVGPQGPRGVQGPPGPAGKPGRRGRAGSDGARGMPGQTGPKGDRGFDGLAGLPGEKGHRGDPGPSGPPGPPGDDGERGDDGEVGPRGLPGEPGPRGLLGPKGPPGPPGPPGVTGMDGQPGPKGNVGPQGEPGPPGQQGNPGAQGLPGPQGAIGPPGEKGPLGKPGLPGMPGADGPPGHPGKEGPPGEKGGQGPPGPQGPIGYPGPRGVKGADGIRGLKGTKGEKGEDGFPGFKGDMGIKGDRGEIGPPGPRGEDGPEGPKGRGGPNGDPGPLGPPGEKGKLGVPGLPGYPGRQGPKGSIGFPGFPGANGEKGGRGTPGKPGPRGQRGPTGPRGERGPRGITGKPGPKGNSGGDGPAGPPGERGPNGPQGPTGFPGPKGPPGPPGKDGLPGHPGQRGETGFQGKTGPPGPPGVVGPQGPTGETGPMGERGHPGPPGPPGEQGLPGLAGKEGTKGDPGPAGLPGKDGPPGLRGFPGDRGLPGPVGALGLKGNEGPPGPPGPAGSPGERGPAGAAGPIGIPGRPGPQGPPGPAGEKGAPGEKGPQGPAGRDGLQGPVGLPGPAGPVGPPGEDGDKGEIGEPGQKGSKGDKGEQGPPGPTGPQGPIGQPGPSGADGEPGPRGQQGLFGQKGDEGPRGFPGPPGPVGLQGLPGPPGEKGETGDVGQMGPPGPPGPRGPSGAPGADGPQGPPGGIGNPGAVGEKGEPGEAGEPGLPGEGGPPGPKGERGEKGESGPSGAAGPPGPKGPPGDDGPKGSPGPVGFPGDPGPPGEPGPAGQDGPPGDKGDDGEPGQTGSPGPTGEPGPSGPPGKRGPPGPAGPEGRQGEKGAKGEAGLEGPPGKTGPIGPQGAPGKPGPDGLRGIPGPVGEQGLPGSPGPDGPPGPMGPPGLPGLKGDSGPKGEKGHPGLIGLIGPPGEQGEKGDRGLPGPQGSSGPKGEQGITGPSGPIGPPGPPGLPGPPGPKGAKGSSGPTGPKGEAGHPGPPGPPGPPGEVIQPLPIQASRTRRNIDASQLLDDGNGENYVDYADGMEEIFGSLNSLKLEIEQMKRPLGTQQNPARTCKDLQLCHPDFPDGEYWVDPNQGCSRDSFKVYCNFTAGGSTCVFPDKKSEGARITSWPKENPGSWFSEFKRGKLLSYVDAEGNPVGVVQMTFLRLLSASAHQNVTYHCYQSVAWQDAATGSYDKALRFLGSNDEEMSYDNNPYIRALVDGCATKKGYQKTVLEIDTPKVEQVPIVDIMFNDFGEASQKFGFEVGPACFMG.

An N-terminal signal peptide occupies residues 1–37 (MDVHTRWKARSALRPGAPLLPPLLLLLLWAPPPSRAA). The region spanning 72–244 (DVAYRVTKDA…DYCEHYSPDC (173 aa)) is the Laminin G-like domain. Residues 231–443 (RAAYDYCEHY…MPANQDTIYE (213 aa)) are nonhelical region. Sulfotyrosine occurs at positions 234, 236, 240, 262, and 263. Disordered regions lie at residues 242–269 (PDCDTAVPDTPQSQDPNPDEYYTEGDGE), 281–457 (EDPE…QKGE), 470–520 (PPGP…GTML), 526–545 (FGGGGDAGSKGPMVSAQESQ), and 559–1574 (GPAG…EVIQ). A compositionally biased stretch (acidic residues) spans 258-269 (NPDEYYTEGDGE). Positions 285-304 (DLGKEPTPSKKPVEAAKETT) are enriched in basic and acidic residues. Low complexity predominate over residues 309–323 (ELTPTPTEAAPMPET). 4 positions are modified to sulfotyrosine: Y338, Y340, Y346, and Y347. Residues 377–388 (PTSTADTSNSSN) are compositionally biased toward polar residues. The segment covering 396 to 406 (GADDLEGEFTE) has biased composition (acidic residues). Sulfotyrosine is present on residues Y416, Y417, Y420, and Y421. Residues 417-428 (YDPYYDPTSSPS) show a composition bias toward low complexity. An interrupted collagenous region region spans residues 444–558 (GIGGPRGEKG…ILQQARLALR (115 aa)). A compositionally biased stretch (pro residues) spans 470 to 485 (PPGPEGPAGLPGPPGT). Low complexity predominate over residues 506-520 (LPGADGLPGPPGTML). Residues 559–1570 (GPAGPMGLTG…GPPGPPGPPG (1012 aa)) form a triple-helical region region. A hydroxyproline mark is found at P570 and P576. Positions 587–597 (DVGPQGPRGVQ) are enriched in low complexity. At P621 the chain carries Hydroxyproline. At K627 the chain carries 5-hydroxylysine. Hydroxyproline is present on P639. Residue K642 is modified to 5-hydroxylysine. A hydroxyproline mark is found at P648, P654, P657, P675, and P678. The segment covering 671–686 (PRGLPGEPGPRGLLGP) has biased composition (low complexity). K687 bears the 5-hydroxylysine mark. Over residues 687-696 (KGPPGPPGPP) the composition is skewed to pro residues. Residues P690, P696, and P705 each carry the hydroxyproline modification. K708 bears the 5-hydroxylysine mark. Hydroxyproline is present on residues P717, P720, P726, and P732. Low complexity predominate over residues 722–741 (QQGNPGAQGLPGPQGAIGPP). Residue K744 is modified to 5-hydroxylysine. Residues 747–756 (LGKPGLPGMP) are compositionally biased toward low complexity. Hydroxyproline occurs at positions 750, 756, 762, 765, and 771. K774 carries the 5-hydroxylysine modification. Hydroxyproline occurs at positions 780 and 789. Residues K795, K804, K807, and K810 each carry the 5-hydroxylysine modification. P816 carries the post-translational modification Hydroxyproline. K819 carries the post-translational modification 5-hydroxylysine. Position 834 is a hydroxyproline (P834). The segment covering 837–846 (RGEDGPEGPK) has biased composition (basic and acidic residues). K846 carries the post-translational modification 5-hydroxylysine. At P861 the chain carries Hydroxyproline. K864 bears the 5-hydroxylysine mark. Over residues 867–876 (LGVPGLPGYP) the composition is skewed to low complexity. Residues P870, P873, and P876 each carry the hydroxyproline modification. 5-hydroxylysine is present on K882. 2 positions are modified to hydroxyproline: P888 and P891. K897 is modified (5-hydroxylysine). Hydroxyproline is present on residues P903 and P906. Over residues 908-917 (PRGQRGPTGP) the composition is skewed to low complexity. 2 positions are modified to hydroxyproline: P930 and P945. Low complexity-rich tracts occupy residues 971–990 (KDGLPGHPGQRGETGFQGKT) and 999–1011 (VGPQGPTGETGPM). Hydroxyproline is present on residues P1017, P1020, P1023, and P1029. Low complexity predominate over residues 1088–1104 (SPGERGPAGAAGPIGIP). Over residues 1106 to 1115 (RPGPQGPPGP) the composition is skewed to pro residues. Positions 1116–1140 (AGEKGAPGEKGPQGPAGRDGLQGPV) are enriched in low complexity. P1221 and P1224 each carry hydroxyproline. The span at 1259-1268 (PSGAPGADGP) shows a compositional bias: low complexity. Pro residues-rich tracts occupy residues 1380–1398 (TGEPGPSGPPGKRGPPGPA) and 1454–1469 (SPGPDGPPGPMGPPGL). Hydroxyproline is present on residues P1467 and P1470. Over residues 1485–1494 (PGLIGLIGPP) the composition is skewed to low complexity. A compositionally biased stretch (pro residues) spans 1526 to 1541 (PIGPPGPPGLPGPPGP). Over residues 1542-1554 (KGAKGSSGPTGPK) the composition is skewed to low complexity. A compositionally biased stretch (pro residues) spans 1560 to 1569 (PGPPGPPGPP). Residues 1571–1605 (EVIQPLPIQASRTRRNIDASQLLDDGNGENYVDYA) are nonhelical region. Residues Y1601 and Y1604 each carry the sulfotyrosine modification. Residues 1606–1838 (DGMEEIFGSL…FEVGPACFMG (233 aa)) constitute a propeptide, C-terminal propeptide. In terms of domain architecture, Fibrillar collagen NC1 spans 1609–1837 (EEIFGSLNSL…GFEVGPACFM (229 aa)). 3 disulfide bridges follow: C1639–C1671, C1680–C1835, and C1746–C1789. The Ca(2+) site is built by D1657, N1659, Q1660, C1662, and D1665.

This sequence belongs to the fibrillar collagen family. Trimers of two alpha 1(V) and one alpha 2(V) chains in most tissues and trimers of one alpha 1(V), one alpha 2(V), and one alpha 3(V) chains in placenta. Interacts with CSPG4. Prolines at the third position of the tripeptide repeating unit (G-X-Y) are hydroxylated in some or all of the chains. In terms of processing, sulfated on 40% of tyrosines.

It localises to the secreted. It is found in the extracellular space. The protein localises to the extracellular matrix. Type V collagen is a member of group I collagen (fibrillar forming collagen). It is a minor connective tissue component of nearly ubiquitous distribution. Type V collagen binds to DNA, heparan sulfate, thrombospondin, heparin, and insulin. This is Collagen alpha-1(V) chain (COL5A1) from Homo sapiens (Human).